The chain runs to 210 residues: Pyridoxine/pyridoxamine 5'-phosphate oxidase (210 aa).

Substrate is bound by residues Arg-7–Tyr-10 and Lys-65. FMN is bound by residues Arg-60–Lys-65, Tyr-75–Thr-76, Arg-81, Lys-82, and Gln-104. Substrate-binding residues include Tyr-122, Arg-126, and Ser-130. FMN is bound by residues Gln-139–Ser-140 and Trp-182. Arg-188–His-190 provides a ligand contact to substrate. An FMN-binding site is contributed by Arg-192.

This sequence belongs to the pyridoxamine 5'-phosphate oxidase family. Homodimer. FMN serves as cofactor.

The enzyme catalyses pyridoxamine 5'-phosphate + O2 + H2O = pyridoxal 5'-phosphate + H2O2 + NH4(+). It carries out the reaction pyridoxine 5'-phosphate + O2 = pyridoxal 5'-phosphate + H2O2. It functions in the pathway cofactor metabolism; pyridoxal 5'-phosphate salvage; pyridoxal 5'-phosphate from pyridoxamine 5'-phosphate: step 1/1. Its pathway is cofactor metabolism; pyridoxal 5'-phosphate salvage; pyridoxal 5'-phosphate from pyridoxine 5'-phosphate: step 1/1. Its function is as follows. Catalyzes the oxidation of either pyridoxine 5'-phosphate (PNP) or pyridoxamine 5'-phosphate (PMP) into pyridoxal 5'-phosphate (PLP). This is Pyridoxine/pyridoxamine 5'-phosphate oxidase from Bordetella petrii (strain ATCC BAA-461 / DSM 12804 / CCUG 43448).